A 223-amino-acid polypeptide reads, in one-letter code: Ribosomal RNA small subunit methyltransferase G (223 aa).

Residues Gly84, Leu89, 135–136 (VE), and Arg150 contribute to the S-adenosyl-L-methionine site.

This sequence belongs to the methyltransferase superfamily. RNA methyltransferase RsmG family.

The protein localises to the cytoplasm. It carries out the reaction guanosine(527) in 16S rRNA + S-adenosyl-L-methionine = N(7)-methylguanosine(527) in 16S rRNA + S-adenosyl-L-homocysteine. Its function is as follows. Specifically methylates the N7 position of guanine in position 527 of 16S rRNA. This is Ribosomal RNA small subunit methyltransferase G from Saccharophagus degradans (strain 2-40 / ATCC 43961 / DSM 17024).